The sequence spans 104 residues: L-rhamnose mutarotase (104 aa).

Y18 contributes to the substrate binding site. Residue H22 is the Proton donor of the active site. Substrate contacts are provided by residues Y41 and 76–77 (WW).

This sequence belongs to the rhamnose mutarotase family. In terms of assembly, homodimer.

It is found in the cytoplasm. The enzyme catalyses alpha-L-rhamnose = beta-L-rhamnose. Its pathway is carbohydrate metabolism; L-rhamnose metabolism. Involved in the anomeric conversion of L-rhamnose. In Tolumonas auensis (strain DSM 9187 / NBRC 110442 / TA 4), this protein is L-rhamnose mutarotase.